We begin with the raw amino-acid sequence, 100 residues long: NADH-quinone oxidoreductase subunit K 1 (100 aa).

3 consecutive transmembrane segments (helical) span residues 3-23, 28-48, and 60-80; these read IIKA…LGVI, LITV…ALVA, and IFAF…LGLI.

This sequence belongs to the complex I subunit 4L family. As to quaternary structure, NDH-1 is composed of 14 different subunits. Subunits NuoA, H, J, K, L, M, N constitute the membrane sector of the complex.

The protein resides in the cell inner membrane. The catalysed reaction is a quinone + NADH + 5 H(+)(in) = a quinol + NAD(+) + 4 H(+)(out). Functionally, NDH-1 shuttles electrons from NADH, via FMN and iron-sulfur (Fe-S) centers, to quinones in the respiratory chain. The immediate electron acceptor for the enzyme in this species is believed to be ubiquinone. Couples the redox reaction to proton translocation (for every two electrons transferred, four hydrogen ions are translocated across the cytoplasmic membrane), and thus conserves the redox energy in a proton gradient. The protein is NADH-quinone oxidoreductase subunit K 1 of Aquifex aeolicus (strain VF5).